Consider the following 710-residue polypeptide: MRLWRSPLLLLVVVVELFSWADALTRFISADSLSTCMTDSQLSASKLYASYFPDNQSVAFDISIQSLVSTNVSIDVDISAYGIEIKKVIDPCDMEISGFCPMQTGNIALSGSHTLTGEALSILDSIPSIAYTVPDLDAVVTINIYESDTNTQLACVRTTVQNGRSVYHRAVYWVMCMVIGIPLLIFLLISPVLQTPALWEIVETMITLFQFAQIQALYSMMATSLPAIIYSWGRNFMWSMGIIRIGFMQDVFTWYVKSTGGTPSTLVDLGIHANVALAKRGIDLGSLAKRATTTVTTSTSDSITLRGIKRISYMMGIETTNFFATGFSFFIILLFFSLLVAMASRFIVEMVLLASRNQALKKQRIRLYWKSISKGFFYRVIFVGFTQMSVLSMWEIYTRDSSALAFLSMYVIVDMAVLLCYAFVRTIQIIRKTGPYSHPDVLYNLYSDTQHLMRWGFMYVQLDVRFFYFTFPLLLITLVRSMFIGFGQGSPKVQGCAMFGISVVVFALMVILRPYATKHMNTLHIGVALMNLISGSFILVMCQAFYVEELARQVIGIIFFALNAITMLLLILGIFIRTLIVLFRKSGHGTYYRILDDQSEKATSYNKSIKDMSSSDMAFSDPAYSGTTLRSSVDLNTPEYPFSNRNDSDSTFTNNKYVSPWDAIEEASYANLRGNTDVEQPFMESDYTRISENNNNAERRRKPLPNNAFR.

The signal sequence occupies residues 1–23; it reads MRLWRSPLLLLVVVVELFSWADA. 9 helical membrane-spanning segments follow: residues 173-193, 197-217, 322-342, 376-396, 404-424, 466-486, 492-512, 525-545, and 555-575; these read WVMCMVIGIPLLIFLLISPVL, ALWEIVETMITLFQFAQIQAL, FFATGFSFFIILLFFSLLVAM, FFYRVIFVGFTQMSVLSMWEI, LAFLSMYVIVDMAVLLCYAFV, FFYFTFPLLLITLVRSMFIGF, KVQGCAMFGISVVVFALMVIL, IGVALMNLISGSFILVMCQAF, and IGIIFFALNAITMLLLILGIF. 2 positions are modified to phosphoserine: Ser599 and Ser632. A disordered region spans residues 689 to 710; that stretch reads RISENNNNAERRRKPLPNNAFR.

It belongs to the transient receptor potential (TRP) ion channel family. As to quaternary structure, interacts with rho1.

The protein localises to the cell membrane. It is found in the golgi apparatus membrane. Acts as a key signaling component in the regulation of cell shape and cell wall synthesis through interaction with GTPase Rho1. In Schizosaccharomyces pombe (strain 972 / ATCC 24843) (Fission yeast), this protein is TRP-like ion channel pkd2 (pkd2).